A 241-amino-acid chain; its full sequence is MDSTIRLEESWKAALGPEFRNGYMTELKRFLLDEKQQGRQVFPRGGEYFRALDLTPLDRVRVVILGQDPYHGDGQAHGLCFSVRPGVRTPPSLVNIYKELKEDLGIDPARHGFLESWARQGVLLLNSVLTVERGRAASHQGRGWERFTDAVIRAVNEQAQPVVFMLWGSYAQRKAAFVDRSRHLVLTAPHPSPLSAHSGFFGCRHFSKANAFLTSKGLDPIDWRLPEDPPLAVERPTPPNC.

The active-site Proton acceptor is D68.

The protein belongs to the uracil-DNA glycosylase (UDG) superfamily. UNG family.

Its subcellular location is the cytoplasm. The catalysed reaction is Hydrolyzes single-stranded DNA or mismatched double-stranded DNA and polynucleotides, releasing free uracil.. Functionally, excises uracil residues from the DNA which can arise as a result of misincorporation of dUMP residues by DNA polymerase or due to deamination of cytosine. The polypeptide is Uracil-DNA glycosylase (Sinorhizobium medicae (strain WSM419) (Ensifer medicae)).